Consider the following 273-residue polypeptide: 3-methyl-2-oxobutanoate hydroxymethyltransferase (273 aa).

Mg(2+) contacts are provided by Asp-53 and Asp-92. 3-methyl-2-oxobutanoate-binding positions include 53 to 54, Asp-92, and Lys-122; that span reads DS. Residue Glu-124 participates in Mg(2+) binding. Glu-191 (proton acceptor) is an active-site residue.

Belongs to the PanB family. In terms of assembly, homodecamer; pentamer of dimers. Mg(2+) is required as a cofactor.

It is found in the cytoplasm. The enzyme catalyses 3-methyl-2-oxobutanoate + (6R)-5,10-methylene-5,6,7,8-tetrahydrofolate + H2O = 2-dehydropantoate + (6S)-5,6,7,8-tetrahydrofolate. The protein operates within cofactor biosynthesis; (R)-pantothenate biosynthesis; (R)-pantoate from 3-methyl-2-oxobutanoate: step 1/2. Catalyzes the reversible reaction in which hydroxymethyl group from 5,10-methylenetetrahydrofolate is transferred onto alpha-ketoisovalerate to form ketopantoate. In Bacteroides thetaiotaomicron (strain ATCC 29148 / DSM 2079 / JCM 5827 / CCUG 10774 / NCTC 10582 / VPI-5482 / E50), this protein is 3-methyl-2-oxobutanoate hydroxymethyltransferase.